The following is a 500-amino-acid chain: Protein shisa-6 (500 aa).

Residues 1–25 (MALRRLLLLLLLSLESLDLLPSVHG) form the signal peptide. At 26–174 (ARGRAANRTL…NKYDPEKDKT (149 aa)) the chain is on the extracellular side. 2 N-linked (GlcNAc...) asparagine glycosylation sites follow: Asn32 and Asn59. A disordered region spans residues 52–73 (ARGGRELNGTARAPGIPEAGSR). The helical transmembrane segment at 175–195 (NFTVYITCGVIAFVIVAGVFA) threads the bilayer. Residues 196 to 500 (KVSYDKAHRP…YTASKTEVTV (305 aa)) lie on the Cytoplasmic side of the membrane. A compositionally biased stretch (polar residues) spans 240-255 (TSPKENTPVRSSSKNH). 2 disordered regions span residues 240-269 (TSPK…PEKP) and 349-378 (SQQK…DRGL). Phosphoserine occurs at positions 391, 397, and 409. Position 433 is a phosphothreonine (Thr433). Residues 444–470 (MHSHPSASNNSYATLGQSQTAAKRHAF) form a disordered region. Polar residues predominate over residues 448–464 (PSASNNSYATLGQSQTA). Thr477 bears the Phosphothreonine mark. Positions 497-500 (EVTV) match the PDZ-binding motif.

The protein belongs to the shisa family. Component of the postsynaptic hippocampal AMPA-type glutamate receptor (AMPAR) complex, at least composed of pore forming AMPAR subunits GRIA1, GRIA2 and GRIA3 and AMPAR auxiliary proteins SHISA6 and SHISA7. Interacts (via PDZ-binding motif) with DLG4/PSD-95 (via PDZ domain); the interaction is direct. Expressed in the developing ventral mesencephalon.

Its subcellular location is the membrane. It is found in the postsynaptic density. Its function is as follows. Involved in maintenance of high-frequency synaptic transmission at hippocampal CA3-CA1 synapses. Regulates AMPA-type glutamate receptor (AMPAR) immobilization at postsynaptic density keeping the channels in an activated state in the presence of glutamate and preventing synaptic depression. May play a role in self-renewal and differentiation of spermatogonial stem cells by inhibiting canonical Wnt signaling pathway. The sequence is that of Protein shisa-6 from Homo sapiens (Human).